Here is a 157-residue protein sequence, read N- to C-terminus: Regenerating islet-derived protein 4 (157 aa).

An N-terminal signal peptide occupies residues 1 to 22 (MASKGVRLLLLLSWVAGPEVLS). A disulfide bond links Cys-29 and Cys-40. The C-type lectin domain maps to 36–154 (YRSHCYGYFR…CANRQHFLCK (119 aa)). Residues Asn-49 and Asn-62 are each glycosylated (N-linked (GlcNAc...) asparagine). Disulfide bonds link Cys-57–Cys-153 and Cys-128–Cys-145. Residues 97 to 102 (DPQKKQ) and 134 to 136 (KDK) each bind a carbohydrate.

The protein resides in the secreted. Functionally, calcium-independent lectin displaying mannose-binding specificity and able to maintain carbohydrate recognition activity in an acidic environment. May be involved in inflammatory and metaplastic responses of the gastrointestinal epithelium. This is Regenerating islet-derived protein 4 (Reg4) from Mus musculus (Mouse).